The following is a 429-amino-acid chain: Enolase 2 (429 aa).

A (2R)-2-phosphoglycerate-binding site is contributed by Gln-163. Catalysis depends on Glu-205, which acts as the Proton donor. Positions 242, 286, and 313 each coordinate Mg(2+). Positions 338, 367, 368, and 389 each coordinate (2R)-2-phosphoglycerate. The active-site Proton acceptor is Lys-338.

Belongs to the enolase family. Mg(2+) serves as cofactor.

It is found in the cytoplasm. The protein localises to the secreted. Its subcellular location is the cell surface. It carries out the reaction (2R)-2-phosphoglycerate = phosphoenolpyruvate + H2O. The protein operates within carbohydrate degradation; glycolysis; pyruvate from D-glyceraldehyde 3-phosphate: step 4/5. Catalyzes the reversible conversion of 2-phosphoglycerate (2-PG) into phosphoenolpyruvate (PEP). It is essential for the degradation of carbohydrates via glycolysis. This chain is Enolase 2, found in Lactiplantibacillus plantarum (strain ATCC BAA-793 / NCIMB 8826 / WCFS1) (Lactobacillus plantarum).